The chain runs to 207 residues: Suppressor of IKBKE 1 (207 aa).

Coiled-coil stretches lie at residues 4-32 (TIDK…LIDQ) and 154-193 (DAIQ…SLHS). The disordered stretch occupies residues 186–207 (TSKESLHSSKRESEWNFSEKTQ). Residues 189 to 199 (ESLHSSKRESE) are compositionally biased toward basic and acidic residues.

This sequence belongs to the SIKE family. Interacts with IKBKE and TBK1 via its coiled coil region. Interaction with TBK1 is disrupted upon viral infection or TLR3 stimulation. Interacts with CDC42BPB. Associates with the STRIPAK core complex composed of PP2A catalytic and scaffolding subunits, the striatins (PP2A regulatory subunits), the striatin-associated proteins MOB4, STRIP1 and STRIP2, PDCD10 and members of the STE20 kinases, such as STK24 and STK26.

Functionally, suppressor of IKK-epsilon. Associates with the striatin-interacting phosphatase and kinase (STRIPAK) core complex, forming the extended (SIKE1:SLMAP)STRIPAK complex. The (SIKE1:SLMAP)STRIPAK complex dephosphorylates STK3 leading to the inhibition of Hippo signaling and the control of cell growth. The polypeptide is Suppressor of IKBKE 1 (sike1) (Xenopus tropicalis (Western clawed frog)).